The following is a 179-amino-acid chain: ATP synthase subunit delta (179 aa).

This sequence belongs to the ATPase delta chain family. In terms of assembly, F-type ATPases have 2 components, F(1) - the catalytic core - and F(0) - the membrane proton channel. F(1) has five subunits: alpha(3), beta(3), gamma(1), delta(1), epsilon(1). F(0) has three main subunits: a(1), b(2) and c(10-14). The alpha and beta chains form an alternating ring which encloses part of the gamma chain. F(1) is attached to F(0) by a central stalk formed by the gamma and epsilon chains, while a peripheral stalk is formed by the delta and b chains.

The protein localises to the cell inner membrane. In terms of biological role, f(1)F(0) ATP synthase produces ATP from ADP in the presence of a proton or sodium gradient. F-type ATPases consist of two structural domains, F(1) containing the extramembraneous catalytic core and F(0) containing the membrane proton channel, linked together by a central stalk and a peripheral stalk. During catalysis, ATP synthesis in the catalytic domain of F(1) is coupled via a rotary mechanism of the central stalk subunits to proton translocation. This protein is part of the stalk that links CF(0) to CF(1). It either transmits conformational changes from CF(0) to CF(1) or is implicated in proton conduction. In Anaeromyxobacter sp. (strain Fw109-5), this protein is ATP synthase subunit delta.